A 153-amino-acid chain; its full sequence is Large ribosomal subunit protein uL30 (153 aa).

It belongs to the universal ribosomal protein uL30 family. In terms of assembly, part of the 50S ribosomal subunit.

This chain is Large ribosomal subunit protein uL30, found in Methanosarcina mazei (strain ATCC BAA-159 / DSM 3647 / Goe1 / Go1 / JCM 11833 / OCM 88) (Methanosarcina frisia).